The following is a 434-amino-acid chain: Tryptophan synthase beta chain 2 (434 aa).

K110 carries the N6-(pyridoxal phosphate)lysine modification.

Belongs to the TrpB family. In terms of assembly, tetramer of two alpha and two beta chains. It depends on pyridoxal 5'-phosphate as a cofactor.

It carries out the reaction (1S,2R)-1-C-(indol-3-yl)glycerol 3-phosphate + L-serine = D-glyceraldehyde 3-phosphate + L-tryptophan + H2O. The protein operates within amino-acid biosynthesis; L-tryptophan biosynthesis; L-tryptophan from chorismate: step 5/5. In terms of biological role, the beta subunit is responsible for the synthesis of L-tryptophan from indole and L-serine. In Aquifex aeolicus (strain VF5), this protein is Tryptophan synthase beta chain 2 (trpB2).